The following is a 1026-amino-acid chain: Phosphoenolpyruvate carboxylase (1026 aa).

Catalysis depends on residues histidine 199 and lysine 672.

It belongs to the PEPCase type 1 family. Requires Mg(2+) as cofactor.

It carries out the reaction oxaloacetate + phosphate = phosphoenolpyruvate + hydrogencarbonate. Its function is as follows. Forms oxaloacetate, a four-carbon dicarboxylic acid source for the tricarboxylic acid cycle. In Nostoc sp. (strain PCC 7120 / SAG 25.82 / UTEX 2576), this protein is Phosphoenolpyruvate carboxylase (ppc).